The following is a 187-amino-acid chain: Translation initiation factor IF-3 (187 aa).

This sequence belongs to the IF-3 family. As to quaternary structure, monomer.

It is found in the cytoplasm. Functionally, IF-3 binds to the 30S ribosomal subunit and shifts the equilibrium between 70S ribosomes and their 50S and 30S subunits in favor of the free subunits, thus enhancing the availability of 30S subunits on which protein synthesis initiation begins. The protein is Translation initiation factor IF-3 of Leptospira biflexa serovar Patoc (strain Patoc 1 / Ames).